Reading from the N-terminus, the 335-residue chain is Methionine import ATP-binding protein MetN 1 (335 aa).

Residues 2-242 form the ABC transporter domain; sequence IEFHNVHKTY…PQHPTTRRFV (241 aa). 38–45 serves as a coordination point for ATP; the sequence is GHSGAGKS.

The protein belongs to the ABC transporter superfamily. Methionine importer (TC 3.A.1.24) family. The complex is composed of two ATP-binding proteins (MetN), two transmembrane proteins (MetI) and a solute-binding protein (MetQ).

It localises to the cell inner membrane. The catalysed reaction is L-methionine(out) + ATP + H2O = L-methionine(in) + ADP + phosphate + H(+). It carries out the reaction D-methionine(out) + ATP + H2O = D-methionine(in) + ADP + phosphate + H(+). In terms of biological role, part of the ABC transporter complex MetNIQ involved in methionine import. Responsible for energy coupling to the transport system. In Pseudomonas savastanoi pv. phaseolicola (strain 1448A / Race 6) (Pseudomonas syringae pv. phaseolicola (strain 1448A / Race 6)), this protein is Methionine import ATP-binding protein MetN 1.